The following is a 135-amino-acid chain: MGYRKLGRTSSQRKALLRDLATDLIVFERIETTEARAKEIRKVVEKLITSGKKGDLHARRQAAAFVRHEVVEVVQVDAKGKDGSTVKKNRPVYALQKLFDDVAPRYAERQGGYTRILKKGPRRGDGAPMVIIELV.

It belongs to the bacterial ribosomal protein bL17 family. Part of the 50S ribosomal subunit. Contacts protein L32.

This is Large ribosomal subunit protein bL17 from Listeria welshimeri serovar 6b (strain ATCC 35897 / DSM 20650 / CCUG 15529 / CIP 8149 / NCTC 11857 / SLCC 5334 / V8).